The primary structure comprises 610 residues: All-trans-retinol 13,14-reductase (610 aa).

Positions 1–18 are cleaved as a signal peptide; it reads MWLPLVLFLAVLLLAVVC.

The protein belongs to the carotenoid/retinoid oxidoreductase family. CrtISO subfamily. The cofactor is NAD(+). Requires NADP(+) as cofactor. It depends on FAD as a cofactor.

Its subcellular location is the endoplasmic reticulum membrane. It carries out the reaction all-trans-13,14-dihydroretinol + A = all-trans-retinol + AH2. In terms of biological role, catalyzes the saturation of all-trans-retinol to all-trans-13,14-dihydroretinol. Does not exhibit any activity toward all-trans-retinoic acid, nor 9-cis, 11-cis or 13-cis-retinol isomers. May play a role in the metabolism of vitamin A. Independently of retinol conversion, may regulate liver metabolism upstream of MLXIPL/ChREBP. May play a role in adipocyte differentiation. This is All-trans-retinol 13,14-reductase (RETSAT) from Macaca fascicularis (Crab-eating macaque).